A 361-amino-acid chain; its full sequence is Phosphoserine aminotransferase (361 aa).

L-glutamate is bound at residue Arg-42. Pyridoxal 5'-phosphate-binding positions include 76–77 (AR), Trp-102, Thr-153, Asp-173, and Gln-196. The residue at position 197 (Lys-197) is an N6-(pyridoxal phosphate)lysine. 238 to 239 (NT) is a binding site for pyridoxal 5'-phosphate.

The protein belongs to the class-V pyridoxal-phosphate-dependent aminotransferase family. SerC subfamily. As to quaternary structure, homodimer. The cofactor is pyridoxal 5'-phosphate.

Its subcellular location is the cytoplasm. The enzyme catalyses O-phospho-L-serine + 2-oxoglutarate = 3-phosphooxypyruvate + L-glutamate. The catalysed reaction is 4-(phosphooxy)-L-threonine + 2-oxoglutarate = (R)-3-hydroxy-2-oxo-4-phosphooxybutanoate + L-glutamate. It functions in the pathway amino-acid biosynthesis; L-serine biosynthesis; L-serine from 3-phospho-D-glycerate: step 2/3. The protein operates within cofactor biosynthesis; pyridoxine 5'-phosphate biosynthesis; pyridoxine 5'-phosphate from D-erythrose 4-phosphate: step 3/5. Functionally, catalyzes the reversible conversion of 3-phosphohydroxypyruvate to phosphoserine and of 3-hydroxy-2-oxo-4-phosphonooxybutanoate to phosphohydroxythreonine. The protein is Phosphoserine aminotransferase of Mannheimia succiniciproducens (strain KCTC 0769BP / MBEL55E).